The following is a 1877-amino-acid chain: Phosphatidylinositol 4-kinase stt4 (1877 aa).

Positions 1305–1491 (PDSDAASSPI…KPILDRVMDK (187 aa)) constitute a PIK helical domain. The tract at residues 1492 to 1625 (MINSLSGEDK…EVWQSAIFKV (134 aa)) is pleckstrin homology (PH) domain conferring phosphoinositide binding specificity. One can recognise a PI3K/PI4K catalytic domain in the interval 1593-1861 (DPEELAVNGT…LIEQSYANKR (269 aa)). The tract at residues 1599–1605 (VNGTEEE) is G-loop. Positions 1728-1736 (QFKDRHNGN) are catalytic loop. Positions 1747 to 1771 (HIDFGFIFDIAPGGITFESAPFKLT) are activation loop.

This sequence belongs to the PI3/PI4-kinase family. Type III PI4K subfamily.

The protein localises to the cytoplasm. The enzyme catalyses a 1,2-diacyl-sn-glycero-3-phospho-(1D-myo-inositol) + ATP = a 1,2-diacyl-sn-glycero-3-phospho-(1D-myo-inositol 4-phosphate) + ADP + H(+). Acts on phosphatidylinositol (PI) in the first committed step in the production of the second messenger inositol 1,4,5,-trisphosphate. In Schizosaccharomyces pombe (strain 972 / ATCC 24843) (Fission yeast), this protein is Phosphatidylinositol 4-kinase stt4 (stt4).